The primary structure comprises 349 residues: Farnesyl pyrophosphate synthase (349 aa).

Residues lysine 48, arginine 51, and glutamine 90 each coordinate isopentenyl diphosphate. Residues aspartate 97 and aspartate 101 each contribute to the Mg(2+) site. Arginine 106 is a dimethylallyl diphosphate binding site. Residue arginine 107 participates in isopentenyl diphosphate binding. Positions 194, 195, 234, 251, and 260 each coordinate dimethylallyl diphosphate.

It belongs to the FPP/GGPP synthase family. The cofactor is Mg(2+).

It is found in the cytoplasm. The enzyme catalyses isopentenyl diphosphate + dimethylallyl diphosphate = (2E)-geranyl diphosphate + diphosphate. It carries out the reaction isopentenyl diphosphate + (2E)-geranyl diphosphate = (2E,6E)-farnesyl diphosphate + diphosphate. It functions in the pathway isoprenoid biosynthesis; farnesyl diphosphate biosynthesis; farnesyl diphosphate from geranyl diphosphate and isopentenyl diphosphate: step 1/1. Its pathway is isoprenoid biosynthesis; geranyl diphosphate biosynthesis; geranyl diphosphate from dimethylallyl diphosphate and isopentenyl diphosphate: step 1/1. In terms of biological role, catalyzes the sequential condensation of isopentenyl pyrophosphate with the allylic pyrophosphates, dimethylallyl pyrophosphate, and then with the resultant geranylpyrophosphate to the ultimate product farnesyl pyrophosphate. In Kluyveromyces lactis (strain ATCC 8585 / CBS 2359 / DSM 70799 / NBRC 1267 / NRRL Y-1140 / WM37) (Yeast), this protein is Farnesyl pyrophosphate synthase (FPS1).